The following is a 447-amino-acid chain: Probable butyrate:acetyl-CoA coenzyme A-transferase (447 aa).

220–224 lines the CoA pocket; that stretch reads GIGGT. The active-site 5-glutamyl coenzyme A thioester intermediate is the glutamate 245. CoA contacts are provided by isoleucine 320 and glycine 343.

This sequence belongs to the acetyl-CoA hydrolase/transferase family.

Its subcellular location is the cytoplasm. The catalysed reaction is butanoate + acetyl-CoA = butanoyl-CoA + acetate. The protein operates within lipid metabolism; butanoate metabolism. Coenzyme A-transferase that converts butyrate to butyryl-CoA. Involved in the syntrophic growth of S.wolfei on butyrate in cooperation with methanogens or an appropriate hydrogen-scavenging bacterium, as part of the butyrate oxidation pathway. This Syntrophomonas wolfei subsp. wolfei (strain DSM 2245B / Goettingen) protein is Probable butyrate:acetyl-CoA coenzyme A-transferase.